We begin with the raw amino-acid sequence, 232 residues long: Ribonuclease P protein component 3 (232 aa).

Belongs to the eukaryotic/archaeal RNase P protein component 3 family. Consists of a catalytic RNA component and at least 4-5 protein subunits.

The protein resides in the cytoplasm. The enzyme catalyses Endonucleolytic cleavage of RNA, removing 5'-extranucleotides from tRNA precursor.. In terms of biological role, part of ribonuclease P, a protein complex that generates mature tRNA molecules by cleaving their 5'-ends. This is Ribonuclease P protein component 3 from Methanococcus maripaludis (strain C6 / ATCC BAA-1332).